A 166-amino-acid chain; its full sequence is Heavy metal-associated isoprenylated plant protein 45 (166 aa).

Positions 15-78 (LSIVELLVDM…MVKRTGRTAE (64 aa)) constitute an HMA domain. A metal cation is bound by residues C26 and C29. The residue at position 163 (C163) is a Cysteine methyl ester. C163 is lipidated: S-farnesyl cysteine. A propeptide spans 164 to 166 (TIM) (removed in mature form).

It belongs to the HIPP family.

Heavy-metal-binding protein. The protein is Heavy metal-associated isoprenylated plant protein 45 of Arabidopsis thaliana (Mouse-ear cress).